The chain runs to 465 residues: Kynureninase (465 aa).

An N-acetylmethionine modification is found at methionine 1. Pyridoxal 5'-phosphate is bound by residues leucine 137, threonine 138, 165–168, serine 221, aspartate 250, histidine 253, and tyrosine 275; that span reads FPSD. An N6-(pyridoxal phosphate)lysine modification is found at lysine 276. 2 residues coordinate pyridoxal 5'-phosphate: tryptophan 305 and asparagine 333.

This sequence belongs to the kynureninase family. Homodimer. Requires pyridoxal 5'-phosphate as cofactor. As to expression, expressed in all tissues tested (heart, brain placenta, lung, liver, skeletal muscle, kidney and pancreas). Highest levels found in placenta, liver and lung. Expressed in all brain regions.

Its subcellular location is the cytoplasm. It is found in the cytosol. The enzyme catalyses L-kynurenine + H2O = anthranilate + L-alanine + H(+). The catalysed reaction is 3-hydroxy-L-kynurenine + H2O = 3-hydroxyanthranilate + L-alanine + H(+). The protein operates within amino-acid degradation; L-kynurenine degradation; L-alanine and anthranilate from L-kynurenine: step 1/1. It functions in the pathway cofactor biosynthesis; NAD(+) biosynthesis; quinolinate from L-kynurenine: step 2/3. With respect to regulation, inhibited by o-methoxybenzoylalanine (OMBA). Catalyzes the cleavage of L-kynurenine (L-Kyn) and L-3-hydroxykynurenine (L-3OHKyn) into anthranilic acid (AA) and 3-hydroxyanthranilic acid (3-OHAA), respectively. Has a preference for the L-3-hydroxy form. Also has cysteine-conjugate-beta-lyase activity. The protein is Kynureninase of Homo sapiens (Human).